A 223-amino-acid chain; its full sequence is Rho-related protein racE (223 aa).

18 to 25 is a binding site for GTP; it reads GDGAVGKT. An Effector region motif is present at residues 40 to 48; it reads YVPTVFENY. GTP contacts are provided by residues 65–69 and 123–126; these read DTAGQ and TKID. The disordered stretch occupies residues 187-223; sequence GMDKKSQDGSSSASGVPSGDKPTKGKAGKKKSGCIIL. Basic residues predominate over residues 210-223; sequence KGKAGKKKSGCIIL. Cys220 is modified (cysteine methyl ester). Cys220 is lipidated: S-geranylgeranyl cysteine. Residues 221–223 constitute a propeptide, removed in mature form; the sequence is IIL.

It belongs to the small GTPase superfamily. Rho family. Interacts with rgaA.

The protein localises to the cell membrane. Specifically required for cytokinesis. The polypeptide is Rho-related protein racE (racE) (Dictyostelium discoideum (Social amoeba)).